The following is a 916-amino-acid chain: Protein translocase subunit SecA (916 aa).

Residues Gln-88, 106–110 (GEGKT), and Asp-519 contribute to the ATP site. Residues Cys-902, Cys-904, Cys-913, and Cys-914 each coordinate Zn(2+).

This sequence belongs to the SecA family. As to quaternary structure, monomer and homodimer. Part of the essential Sec protein translocation apparatus which comprises SecA, SecYEG and auxiliary proteins SecDF. Other proteins may also be involved. Zn(2+) is required as a cofactor.

The protein resides in the cell inner membrane. It localises to the cytoplasm. The enzyme catalyses ATP + H2O + cellular proteinSide 1 = ADP + phosphate + cellular proteinSide 2.. In terms of biological role, part of the Sec protein translocase complex. Interacts with the SecYEG preprotein conducting channel. Has a central role in coupling the hydrolysis of ATP to the transfer of proteins into and across the cell membrane, serving as an ATP-driven molecular motor driving the stepwise translocation of polypeptide chains across the membrane. This Treponema pallidum (strain Nichols) protein is Protein translocase subunit SecA.